The primary structure comprises 518 residues: Myosin-binding protein 7 (518 aa).

Residues 69-167 form the GTD-binding domain; that stretch reads NELELLRETV…ALTFEAQAYK (99 aa). The disordered stretch occupies residues 276 to 350; the sequence is VVGQSPRHQR…DSSEIGDNDM (75 aa). Over residues 291-301 the composition is skewed to low complexity; it reads STGSASSLLGT. Positions 310 to 320 are enriched in polar residues; sequence SNDSPRSNNGS. Ser385 is subject to Phosphoserine. Residues 399–431 adopt a coiled-coil conformation; it reads EISKLYMRLQALEADRESMRQAIMSMRTEKAQM. A helical membrane pass occupies residues 458–477; the sequence is IIGAFNFISVFKWITSFVFW.

In terms of assembly, interacts with myosin XI-I.

It is found in the endomembrane system. Functionally, membrane-anchored myosin receptors that define a distinct, plant-specific transport vesicle compartment. This Arabidopsis thaliana (Mouse-ear cress) protein is Myosin-binding protein 7.